Consider the following 408-residue polypeptide: E3 ubiquitin-protein ligase IE2 (408 aa).

A compositionally biased stretch (polar residues) spans 1–10; the sequence is MSRQINAATP. Disordered regions lie at residues 1-67 and 176-199; these read MSRQ…ENVQ and QSPD…QSEP. The span at 13-25 shows a compositional bias: basic residues; sequence SRRHRLSLSRRRI. A compositionally biased stretch (low complexity) spans 30 to 47; the sequence is SPEAQPSSSSRSQPSSSS. A run of 4 repeats spans residues 34-41, 42-49, 51-54, and 55-58. The 2 X 8 AA tandem repeats of Q-P-S-S-S-S-R-S stretch occupies residues 34–49; it reads QPSSSSRSQPSSSSRS. A 2 X 4 AA tandem repeats of R-R-Q-E region spans residues 51 to 58; it reads RRQERRQE. Residues 183–197 show a composition bias toward low complexity; that stretch reads SPQSPQPQQQQQQQS. The RING-type zinc-finger motif lies at 207-255; sequence CNICFTTFKDTKNVNSSFVTSIHCNHAVCFKCYVKIIMDNSVYKCFCSA.

The protein belongs to the alphabaculovirus IE2 protein family. As to quaternary structure, homooligomer. Auto-ubiquitinated.

Its subcellular location is the host nucleus. The enzyme catalyses S-ubiquitinyl-[E2 ubiquitin-conjugating enzyme]-L-cysteine + [acceptor protein]-L-lysine = [E2 ubiquitin-conjugating enzyme]-L-cysteine + N(6)-ubiquitinyl-[acceptor protein]-L-lysine.. Its function is as follows. RING-finger E3 ubiquitin ligase that plays an important regulatory role during the initial stages of infection. Migrates to specific nuclear foci early in infection supposely to prepare the sites for viral transcription and replication by targeting and ubiquitinating host proteins. Acts as a transcriptional activator and activates a number of viral promoters including itself, IE1 and the promoter of 39K gene. The chain is E3 ubiquitin-protein ligase IE2 (IE2) from Lepidoptera (butterflies and moths).